Consider the following 157-residue polypeptide: Endoribonuclease YbeY (157 aa).

Positions 122, 126, and 132 each coordinate Zn(2+).

The protein belongs to the endoribonuclease YbeY family. The cofactor is Zn(2+).

It is found in the cytoplasm. In terms of biological role, single strand-specific metallo-endoribonuclease involved in late-stage 70S ribosome quality control and in maturation of the 3' terminus of the 16S rRNA. The sequence is that of Endoribonuclease YbeY from Lysinibacillus sphaericus (strain C3-41).